Reading from the N-terminus, the 837-residue chain is Protein translocase subunit SecA 1 (837 aa).

Residues Gln-85, 103–107 (GEGKT), and Asp-493 each bind ATP. The Zn(2+) site is built by Cys-821, Cys-823, Cys-832, and His-833.

Belongs to the SecA family. Monomer and homodimer. Part of the essential Sec protein translocation apparatus which comprises SecA, SecYEG and auxiliary proteins SecDF. Other proteins may also be involved. The cofactor is Zn(2+).

The protein resides in the cell membrane. It is found in the cytoplasm. The catalysed reaction is ATP + H2O + cellular proteinSide 1 = ADP + phosphate + cellular proteinSide 2.. Functionally, part of the Sec protein translocase complex. Interacts with the SecYEG preprotein conducting channel. Has a central role in coupling the hydrolysis of ATP to the transfer of proteins into and across the cell membrane, serving as an ATP-driven molecular motor driving the stepwise translocation of polypeptide chains across the membrane. This is Protein translocase subunit SecA 1 from Streptococcus pneumoniae serotype 4 (strain ATCC BAA-334 / TIGR4).